We begin with the raw amino-acid sequence, 316 residues long: Probable cell division protein WhiA (316 aa).

Residues 275–309 constitute a DNA-binding region (H-T-H motif); it reads TLKELGEMVASGKISKSGINHRLRKLDEIAEQLRT.

This sequence belongs to the WhiA family.

In terms of biological role, involved in cell division and chromosome segregation. The protein is Probable cell division protein WhiA of Bacillus velezensis (strain DSM 23117 / BGSC 10A6 / LMG 26770 / FZB42) (Bacillus amyloliquefaciens subsp. plantarum).